A 512-amino-acid polypeptide reads, in one-letter code: Maturase K (512 aa).

It belongs to the intron maturase 2 family. MatK subfamily.

It localises to the plastid. Its subcellular location is the chloroplast. Usually encoded in the trnK tRNA gene intron. Probably assists in splicing its own and other chloroplast group II introns. In Oenothera glazioviana (Large-flowered evening primrose), this protein is Maturase K.